Here is a 416-residue protein sequence, read N- to C-terminus: Multifunctional CCA protein (416 aa).

Residues G8 and R11 each coordinate ATP. CTP is bound by residues G8 and R11. Residues D21 and D23 each contribute to the Mg(2+) site. Residues R91, R138, and R141 each coordinate ATP. 3 residues coordinate CTP: R91, R138, and R141. The 103-residue stretch at 229-331 (TGLHQELVSD…YELLQRCDAF (103 aa)) folds into the HD domain.

This sequence belongs to the tRNA nucleotidyltransferase/poly(A) polymerase family. Bacterial CCA-adding enzyme type 1 subfamily. In terms of assembly, monomer. Can also form homodimers and oligomers. Mg(2+) is required as a cofactor. Requires Ni(2+) as cofactor.

The catalysed reaction is a tRNA precursor + 2 CTP + ATP = a tRNA with a 3' CCA end + 3 diphosphate. It catalyses the reaction a tRNA with a 3' CCA end + 2 CTP + ATP = a tRNA with a 3' CCACCA end + 3 diphosphate. In terms of biological role, catalyzes the addition and repair of the essential 3'-terminal CCA sequence in tRNAs without using a nucleic acid template. Adds these three nucleotides in the order of C, C, and A to the tRNA nucleotide-73, using CTP and ATP as substrates and producing inorganic pyrophosphate. tRNA 3'-terminal CCA addition is required both for tRNA processing and repair. Also involved in tRNA surveillance by mediating tandem CCA addition to generate a CCACCA at the 3' terminus of unstable tRNAs. While stable tRNAs receive only 3'-terminal CCA, unstable tRNAs are marked with CCACCA and rapidly degraded. This is Multifunctional CCA protein from Xylella fastidiosa (strain M23).